The chain runs to 312 residues: DNA-directed RNA polymerase subunit alpha (312 aa).

Positions 1–226 (MIEFEKPNIT…EHFKVFESAD (226 aa)) are alpha N-terminal domain (alpha-NTD). Residues 243-312 (KEKKLEMTIE…DLGLSLRQED (70 aa)) form an alpha C-terminal domain (alpha-CTD) region.

It belongs to the RNA polymerase alpha chain family. Homodimer. The RNAP catalytic core consists of 2 alpha, 1 beta, 1 beta' and 1 omega subunit. When a sigma factor is associated with the core the holoenzyme is formed, which can initiate transcription.

The enzyme catalyses RNA(n) + a ribonucleoside 5'-triphosphate = RNA(n+1) + diphosphate. Functionally, DNA-dependent RNA polymerase catalyzes the transcription of DNA into RNA using the four ribonucleoside triphosphates as substrates. The sequence is that of DNA-directed RNA polymerase subunit alpha from Lactobacillus acidophilus (strain ATCC 700396 / NCK56 / N2 / NCFM).